The chain runs to 427 residues: Serine/threonine-protein kinase AFC2 (427 aa).

A Protein kinase domain is found at 98 to 423 (YKIYSKMGEG…AREALRHPFF (326 aa)). ATP is bound by residues 104 to 112 (MGEGTFGQV) and Lys127. Asp223 (proton acceptor) is an active-site residue.

The protein belongs to the protein kinase superfamily. CMGC Ser/Thr protein kinase family. Lammer subfamily.

It catalyses the reaction L-seryl-[protein] + ATP = O-phospho-L-seryl-[protein] + ADP + H(+). The enzyme catalyses L-threonyl-[protein] + ATP = O-phospho-L-threonyl-[protein] + ADP + H(+). It carries out the reaction L-tyrosyl-[protein] + ATP = O-phospho-L-tyrosyl-[protein] + ADP + H(+). The sequence is that of Serine/threonine-protein kinase AFC2 (AFC2) from Arabidopsis thaliana (Mouse-ear cress).